The primary structure comprises 982 residues: MANSMNGRNPGGRGGNPRKGRILGIIDAIQDAVGPPKQAAADRRTVEKTWKLMDKVVRLCQNPKLQLKNSPPYILDILPDTYQHLRLILSKYDDNQKLAQLSENEYFKIYIDSLMKKSKRAIRLFKEGKERMYEEQSQDRRNLTKLSLIFSHMLAEIKAIFPNGQFQGDNFRITKADAAEFWRKFFGDKTIVPWKVFRQCLHEVHQISSGLEAMALKSTIDLTCNDYISVFEFDIFTRLFQPWGSILRNWNFLAVTHPGYMAFLTYDEVKARLQKYSTKPGSYIFRLSCTRLGQWAIGYVTGDGNILQTIPHNKPLFQALIDGSREGFYLYPDGRSYNPDLTGLCEPTPHDHIKVTQEQYELYCEMGSTFQLCKICAENDKDVKIEPCGHLMCTSCLTAWQESDGQGCPFCRCEIKGTEPIIVDPFDPRDEGSRCCSIIDPFGMPMLDLDDDDDREESLMMNRLANVRKCTDRQNSPVTSPGSSPLAQRRKPQPDPLQIPHLSLPPVPPRLDLIQKGIVRSPCGSPTGSPKSSPCMVRKQDKPLPAPPPPLRDPPPPPPERPPPIPPDNRLSRHIHHVESVPSRDPPMPLEAWCPRDVFGTNQLVGCRLLGEGSPKPGITASSNVNGRHSRVGSDPVLMRKHRRHDLPLEGAKVFSNGHLGSEEYDVPPRLSPPPPVTTLLPSIKCTGPLANSLSEKTRDPVEEDDDEYKIPSSHPVSLNSQPSHCHNVKPPVRSCDNGHCMLNGTHGPSSEKKSNIPDLSIYLKGDVFDSASDPVPLPPARPPTRDNPKHGSSLNRTPSDYDLLIPPLGEDAFDALPPSLPPPPPPARHSLIEHSKPPGSSSRPSSGQDLFLLPSDPFVDLASGQVPLPPARRLPGENVKTNRTSQDYDQLPSCSDGSQAPARPPKPRPRRTAPEIHHRKPHGPEAALENVDAKIAKLMGEGYAFEEVKRALEIAQNNVEVARSILREFAFPPPVSPRLNL.

The tract at residues 35–167 (PPKQAAADRR…KAIFPNGQFQ (133 aa)) is 4H. Residues 35-343 (PPKQAAADRR…GRSYNPDLTG (309 aa)) form the Cbl-PTB domain. Residues 168-240 (GDNFRITKAD…FEFDIFTRLF (73 aa)) are EF-hand-like. 5 residues coordinate Ca(2+): Asp-221, Thr-223, Asn-225, Tyr-227, and Glu-232. Positions 241-343 (QPWGSILRNW…GRSYNPDLTG (103 aa)) are SH2-like. Residue Ser-282 is modified to Phosphoserine; by PKC/PRKCQ. A 4-O-phospho-L-tyrosine-binding site is contributed by Arg-286. The segment at 344–372 (LCEPTPHDHIKVTQEQYELYCEMGSTFQL) is linker. Phosphotyrosine is present on Tyr-363. An RING-type zinc finger spans residues 373 to 412 (CKICAENDKDVKIEPCGHLMCTSCLTAWQESDGQGCPFCR). Positions 466-571 (NVRKCTDRQN…PPPIPPDNRL (106 aa)) are disordered. Polar residues predominate over residues 473-486 (RQNSPVTSPGSSPL). A phosphoserine mark is found at Ser-476, Ser-480, Ser-484, Ser-521, Ser-525, and Ser-529. The segment at 543 to 568 (PLPAPPPPLRDPPPPPPERPPPIPPD) is interaction with VAV1. Residues 544-567 (LPAPPPPLRDPPPPPPERPPPIPP) show a composition bias toward pro residues. Phosphoserine is present on Ser-634. 2 positions are modified to phosphotyrosine: Tyr-665 and Tyr-709. 2 disordered regions span residues 688-731 (GPLA…NVKP) and 769-929 (FDSA…EAAL). The span at 715-725 (HPVSLNSQPSH) shows a compositional bias: polar residues. Residues 819–828 (PSLPPPPPPA) are compositionally biased toward pro residues. A compositionally biased stretch (low complexity) spans 838 to 848 (PPGSSSRPSSG). Over residues 880-899 (VKTNRTSQDYDQLPSCSDGS) the composition is skewed to polar residues. Residue Tyr-889 is modified to Phosphotyrosine. Positions 891 to 927 (QLPSCSDGSQAPARPPKPRPRRTAPEIHHRKPHGPEA) are interaction with SH3KBP1. Residues 906–922 (PKPRPRRTAPEIHHRKP) show a composition bias toward basic residues. The region spanning 931–970 (NVDAKIAKLMGEGYAFEEVKRALEIAQNNVEVARSILREF) is the UBA domain.

Interacts with SH3 domain-containing proteins LCK, CRK and SORBS1. Interacts with LCP2 and ZAP70. Interacts with CBL. Interacts with SH3 domain-containing proteins VAV1, FYN, FGR, PLCG1, GRB2, CRKL, PIK3R1 and SH3KBP1/CIN85. Identified in heterotrimeric complexes with SH3KBP1/CIN85, CD2AP and ARHGEF7, where one CBLB peptide binds two copies of the other protein. Interacts with poly-ubiquitinated proteins. Dimerization is required for the binding of poly-ubiquitin, but not for the binding of mono-ubiquitin. Interacts with EGFR (phosphorylated). Interacts with IFT20. Post-translationally, phosphorylated on tyrosine and serine residues upon TCR or BCR activation, and upon various types of cell stimulation. In terms of processing, auto-ubiquitinated upon EGF-mediated cell activation or upon T-cell costimulation by CD28; which promotes proteasomal degradation. Expressed in placenta, heart, lung, kidney, spleen, ovary and testis, as well as fetal brain and liver and hematopoietic cell lines, but not in adult brain, liver, pancreas, salivary gland, or skeletal muscle. Present in lymphocytes (at protein level).

Its subcellular location is the cytoplasm. The enzyme catalyses S-ubiquitinyl-[E2 ubiquitin-conjugating enzyme]-L-cysteine + [acceptor protein]-L-lysine = [E2 ubiquitin-conjugating enzyme]-L-cysteine + N(6)-ubiquitinyl-[acceptor protein]-L-lysine.. It functions in the pathway protein modification; protein ubiquitination. Its function is as follows. E3 ubiquitin-protein ligase which accepts ubiquitin from specific E2 ubiquitin-conjugating enzymes, and transfers it to substrates, generally promoting their degradation by the proteasome. Negatively regulates TCR (T-cell receptor), BCR (B-cell receptor) and FCER1 (high affinity immunoglobulin epsilon receptor) signal transduction pathways. In naive T-cells, inhibits VAV1 activation upon TCR engagement and imposes a requirement for CD28 costimulation for proliferation and IL-2 production. Also acts by promoting PIK3R1/p85 ubiquitination, which impairs its recruitment to the TCR and subsequent activation. In activated T-cells, inhibits PLCG1 activation and calcium mobilization upon restimulation and promotes anergy. In B-cells, acts by ubiquitinating SYK and promoting its proteasomal degradation. Slightly promotes SRC ubiquitination. May be involved in EGFR ubiquitination and internalization. May be functionally coupled with the E2 ubiquitin-protein ligase UB2D3. In association with CBL, required for proper feedback inhibition of ciliary platelet-derived growth factor receptor-alpha (PDGFRA) signaling pathway via ubiquitination and internalization of PDGFRA. This Homo sapiens (Human) protein is E3 ubiquitin-protein ligase CBL-B (CBLB).